Reading from the N-terminus, the 633-residue chain is Glutathione S-transferase C-terminal domain-containing protein (633 aa).

A GST C-terminal domain is found at 130-332; it reads LGFKKTCLKA…QEVPGVKTAA (203 aa). A disordered region spans residues 191–233; that stretch reads NDDKLRRQKLKQQKADGVGPPLTKGKAKSKVHTQETSEGLDSS. A compositionally biased stretch (polar residues) spans 224 to 233; that stretch reads QETSEGLDSS. A Phosphoserine modification is found at Ser-233.

Belongs to the GSTCD family. As to expression, widely expressed in cell types relevant to airway function, including airway smooth muscle cells and epithelial cells.

Its subcellular location is the cytoplasm. This is Glutathione S-transferase C-terminal domain-containing protein (GSTCD) from Homo sapiens (Human).